The chain runs to 111 residues: Toxin 3FTx-Tri2 (111 aa).

The first 19 residues, 1 to 19, serve as a signal peptide directing secretion; it reads MKTLLLALVVLAFVCLGSA. Residues 20-34 constitute a propeptide that is removed on maturation; sequence DQVGLGKEQIDRGRR. Glutamine 35 is subject to Pyrrolidone carboxylic acid. 5 cysteine pairs are disulfide-bonded: cysteine 44-cysteine 68, cysteine 47-cysteine 55, cysteine 61-cysteine 87, cysteine 91-cysteine 102, and cysteine 103-cysteine 108.

The protein belongs to the three-finger toxin family. Ancestral subfamily. Boigatoxin sub-subfamily. As to expression, expressed by the venom gland.

The protein localises to the secreted. In terms of biological role, potent postsynaptic neurotoxin. Displays readily reversible competitive antagonism at the nicotinic acetylcholine receptor (nAChR). In Trimorphodon biscutatus (Western lyre snake), this protein is Toxin 3FTx-Tri2.